A 396-amino-acid polypeptide reads, in one-letter code: NADH-quinone oxidoreductase subunit D (396 aa).

Belongs to the complex I 49 kDa subunit family. As to quaternary structure, NDH-1 is composed of 14 different subunits. Subunits NuoB, C, D, E, F, and G constitute the peripheral sector of the complex.

The protein localises to the cell inner membrane. It carries out the reaction a quinone + NADH + 5 H(+)(in) = a quinol + NAD(+) + 4 H(+)(out). Functionally, NDH-1 shuttles electrons from NADH, via FMN and iron-sulfur (Fe-S) centers, to quinones in the respiratory chain. The immediate electron acceptor for the enzyme in this species is believed to be ubiquinone. Couples the redox reaction to proton translocation (for every two electrons transferred, four hydrogen ions are translocated across the cytoplasmic membrane), and thus conserves the redox energy in a proton gradient. The polypeptide is NADH-quinone oxidoreductase subunit D (Brucella melitensis biotype 1 (strain ATCC 23456 / CCUG 17765 / NCTC 10094 / 16M)).